A 458-amino-acid chain; its full sequence is Light-independent protochlorophyllide reductase subunit N (458 aa).

The [4Fe-4S] cluster site is built by Cys20, Cys45, and Cys105.

It belongs to the BchN/ChlN family. As to quaternary structure, protochlorophyllide reductase is composed of three subunits; ChlL, ChlN and ChlB. Forms a heterotetramer of two ChlB and two ChlN subunits. The cofactor is [4Fe-4S] cluster.

The protein resides in the plastid. It is found in the chloroplast. It catalyses the reaction chlorophyllide a + oxidized 2[4Fe-4S]-[ferredoxin] + 2 ADP + 2 phosphate = protochlorophyllide a + reduced 2[4Fe-4S]-[ferredoxin] + 2 ATP + 2 H2O. It functions in the pathway porphyrin-containing compound metabolism; chlorophyll biosynthesis (light-independent). Functionally, component of the dark-operative protochlorophyllide reductase (DPOR) that uses Mg-ATP and reduced ferredoxin to reduce ring D of protochlorophyllide (Pchlide) to form chlorophyllide a (Chlide). This reaction is light-independent. The NB-protein (ChlN-ChlB) is the catalytic component of the complex. In Angiopteris evecta (Mule's foot fern), this protein is Light-independent protochlorophyllide reductase subunit N.